Here is a 341-residue protein sequence, read N- to C-terminus: ATPase GET3 (341 aa).

34–41 contacts ATP; that stretch reads KGGVGKTT. Residue Asp-63 is part of the active site. Residues Glu-245 and Asn-272 each coordinate ATP. Cys-283 and Cys-286 together coordinate Zn(2+).

It belongs to the arsA ATPase family. Homodimer.

The protein localises to the cytoplasm. The protein resides in the endoplasmic reticulum. In terms of biological role, ATPase required for the post-translational delivery of tail-anchored (TA) proteins to the endoplasmic reticulum. Recognizes and selectively binds the transmembrane domain of TA proteins in the cytosol. This complex then targets to the endoplasmic reticulum by membrane-bound receptors, where the tail-anchored protein is released for insertion. This process is regulated by ATP binding and hydrolysis. ATP binding drives the homodimer towards the closed dimer state, facilitating recognition of newly synthesized TA membrane proteins. ATP hydrolysis is required for insertion. Subsequently, the homodimer reverts towards the open dimer state, lowering its affinity for the membrane-bound receptor, and returning it to the cytosol to initiate a new round of targeting. The sequence is that of ATPase GET3 from Paracoccidioides brasiliensis (strain Pb18).